We begin with the raw amino-acid sequence, 359 residues long: 3-dehydroquinate synthase (359 aa).

Residues 71–76 (DGEAHK), 105–109 (GVIGD), 129–130 (TT), Lys-142, Lys-151, and 169–172 (TLHT) each bind NAD(+). 3 residues coordinate Zn(2+): Glu-184, His-247, and His-264.

The protein belongs to the sugar phosphate cyclases superfamily. Dehydroquinate synthase family. NAD(+) serves as cofactor. Co(2+) is required as a cofactor. The cofactor is Zn(2+).

The protein resides in the cytoplasm. It carries out the reaction 7-phospho-2-dehydro-3-deoxy-D-arabino-heptonate = 3-dehydroquinate + phosphate. Its pathway is metabolic intermediate biosynthesis; chorismate biosynthesis; chorismate from D-erythrose 4-phosphate and phosphoenolpyruvate: step 2/7. Functionally, catalyzes the conversion of 3-deoxy-D-arabino-heptulosonate 7-phosphate (DAHP) to dehydroquinate (DHQ). This Neisseria meningitidis serogroup B (strain ATCC BAA-335 / MC58) protein is 3-dehydroquinate synthase.